The sequence spans 661 residues: Hemocyanin C chain (661 aa).

An intrachain disulfide couples C3 to C557. 6 residues coordinate Cu cation: H200, H204, H230, H350, H354, and H390. N476 is a glycosylation site (N-linked (GlcNAc...) asparagine).

It belongs to the tyrosinase family. Hemocyanin subfamily. As to quaternary structure, hexamer of a number of different chains, of which A, B, and C have been identified. In terms of tissue distribution, hemolymph.

It localises to the secreted. Its subcellular location is the extracellular space. Its function is as follows. Hemocyanins are copper-containing oxygen carriers occurring freely dissolved in the hemolymph of many mollusks and arthropods. This chain is Hemocyanin C chain, found in Panulirus interruptus (California spiny lobster).